Here is a 450-residue protein sequence, read N- to C-terminus: Ribosomal protein uS12 methylthiotransferase RimO (450 aa).

The MTTase N-terminal domain maps to 10–125; the sequence is SRIALVSLGC…VVDIVRRAAT (116 aa). Positions 19, 54, 88, 162, 166, and 169 each coordinate [4Fe-4S] cluster. The Radical SAM core domain occupies 148–378; the sequence is SGSPFTAYLK…AAVQREVSRA (231 aa). A TRAM domain is found at 381–447; that stretch reads RARVGSEVTV…PYDLRARVLS (67 aa).

The protein belongs to the methylthiotransferase family. RimO subfamily. [4Fe-4S] cluster is required as a cofactor.

It is found in the cytoplasm. It carries out the reaction L-aspartate(89)-[ribosomal protein uS12]-hydrogen + (sulfur carrier)-SH + AH2 + 2 S-adenosyl-L-methionine = 3-methylsulfanyl-L-aspartate(89)-[ribosomal protein uS12]-hydrogen + (sulfur carrier)-H + 5'-deoxyadenosine + L-methionine + A + S-adenosyl-L-homocysteine + 2 H(+). Functionally, catalyzes the methylthiolation of an aspartic acid residue of ribosomal protein uS12. The protein is Ribosomal protein uS12 methylthiotransferase RimO of Desulforudis audaxviator (strain MP104C).